The following is a 971-amino-acid chain: Nucleolar protein dao-5 (971 aa).

2 disordered regions span residues 61–926 (RIAS…QWGQ) and 938–971 (KAFR…DSDD). Residues 134 to 150 (KKPAQTPAQKKAASSSD) are compositionally biased toward low complexity. The segment covering 180–190 (SDSDSDSEDSD) has biased composition (acidic residues). Composition is skewed to low complexity over residues 264–275 (AKPAPAKATPKP), 294–304 (KKTPAKAAPKP), 324–335 (AKPTPAKATPKP), 355–366 (AKPAPAKATPKP), 386–397 (AKPTPAKATPKP), 417–428 (AKPTSAKATPKP), 447–457 (KKTPAKAAPKP), 476–498 (AKST…SSSD), 508–519 (AKPTPANATPKP), 539–550 (AKPTSAKATPKP), 569–579 (KKTPAKAAPKP), 598–620 (AKST…SSSD), 630–641 (AKPTSAKATPKP), 691–712 (KATP…SSSD), 751–761 (AKPTPKATPKQ), 780–791 (KKTPAKSTPAKT), and 815–825 (ATTPAKSTPKT). The span at 907–921 (SVSEKFRNNQHDSHF) shows a compositional bias: basic and acidic residues. Residues 939–950 (AFRHEKTKKKKG) show a composition bias toward basic residues. Over residues 957–971 (INQSINSIKFSDSDD) the composition is skewed to polar residues.

Belongs to the NOLC1 family. In terms of assembly, may form dimers. Interacts with RNA polymerase I. In terms of tissue distribution, expressed in the nerve ring and hypodermal tissues. Expressed in the intestine. Expressed in the germline.

The protein resides in the nucleus. The protein localises to the nucleolus. It localises to the nucleoplasm. Its function is as follows. Nucleolar protein which binds to RNA polymerase I and rDNA and is required for efficient RNA polymerase I-mediated rDNA transcription. Maintains the epigenetically active status of rDNA chromatin which facilitates rDNA transcription and sustains germline development, ensuring fertility. Plays a role in the modulation of nucleolus size. May play a role in the regulation of lifespan. In Caenorhabditis elegans, this protein is Nucleolar protein dao-5.